A 447-amino-acid polypeptide reads, in one-letter code: Clusterin (447 aa).

The signal sequence occupies residues 1–21; sequence MKILLLCVALLLTWDNGMVLG. The Nuclear localization signal signature appears at 77–80; sequence KKKK. 5 disulfides stabilise this stretch: Cys101/Cys312, Cys112/Cys304, Cys115/Cys301, Cys120/Cys294, and Cys128/Cys284. A glycan (N-linked (GlcNAc...) asparagine) is linked at Asn102. Ser132 carries the phosphoserine modification. Residues Asn144, Asn290, Asn327, Asn353, and Asn373 are each glycosylated (N-linked (GlcNAc...) asparagine). Ser394 carries the phosphoserine modification. The Nuclear localization signal signature appears at 441–445; sequence RRKSR.

Belongs to the clusterin family. Antiparallel disulfide-linked heterodimer of an alpha chain and a beta chain. Self-associates and forms higher oligomers. Interacts with a broad range of misfolded proteins, including APP, APOC2 and LYZ. Slightly acidic pH promotes interaction with misfolded proteins. Forms high-molecular weight oligomers upon interaction with misfolded proteins. Interacts with APOA1, LRP2, CLUAP1 and PON1. Interacts with the complement membrane attack complex. Interacts (via alpha chain) with XRCC6. Interacts with SYVN1, COMMD1, BTRC, CUL1 and with ubiquitin and SCF (SKP1-CUL1-F-box protein) E3 ubiquitin-protein ligase complexes. Interacts (via alpha chain) with BAX in stressed cells, where BAX undergoes a conformation change leading to association with the mitochondrial membrane. Does not interact with BAX in unstressed cells. Found in a complex with LTF, CLU, EPPIN and SEMG1. Interacts (immaturely glycosylated pre-secreted form) with HSPA5; this interaction promotes CLU stability and facilitates stress-induced CLU retrotranslocation from the secretory pathway to the mitochondria, thereby reducing stress-induced apoptosis by stabilizing mitochondrial membrane integrity. Interacts with BCL2L1; this interaction releases and activates BAX and promotes cell death. Interacts with TGFBR2 and ACVR1. Interacts (secreted form) with STMN3; this interaction may act as an important modulator during neuronal differentiation. Interacts with VLDLR and LRP8. Post-translationally, proteolytically cleaved on its way through the secretory system, probably within the Golgi lumen. Proteolytic cleavage is not necessary for its chaperone activity. All non-secreted forms are not proteolytically cleaved. Chaperone activity of uncleaved forms is dependent on a non-reducing environment. Polyubiquitinated, leading to proteasomal degradation. Under cellular stress, the intracellular level of cleaved form is reduced due to proteasomal degradation. In terms of processing, extensively glycosylated with sulfated N-linked carbohydrates. About 30% of the protein mass is comprised of complex N-linked carbohydrate. Endoplasmic reticulum (ER) stress induces changes in glycosylation status and increases level of hypoglycosylated forms. Core carbohydrates are essential for chaperone activity. Non-secreted forms are hypoglycosylated or unglycosylated. In terms of tissue distribution, detected in Sertoli cells (at protein level). Detected in cultured Sertoli cells, testis, epididymis, liver and brain.

It is found in the secreted. It localises to the nucleus. The protein localises to the cytoplasm. Its subcellular location is the mitochondrion membrane. The protein resides in the cytosol. It is found in the microsome. It localises to the endoplasmic reticulum. The protein localises to the mitochondrion. Its subcellular location is the perinuclear region. The protein resides in the cytoplasmic vesicle. It is found in the secretory vesicle. It localises to the chromaffin granule. Its function is as follows. Functions as extracellular chaperone that prevents aggregation of non native proteins. Prevents stress-induced aggregation of blood plasma proteins. Inhibits formation of amyloid fibrils by APP, APOC2, B2M, CALCA, CSN3, SNCA and aggregation-prone LYZ variants (in vitro). Does not require ATP. Maintains partially unfolded proteins in a state appropriate for subsequent refolding by other chaperones, such as HSPA8/HSC70. Does not refold proteins by itself. Binding to cell surface receptors triggers internalization of the chaperone-client complex and subsequent lysosomal or proteasomal degradation. When secreted, protects cells against apoptosis and against cytolysis by complement: inhibits assembly of the complement membrane attack complex (MAC) by preventing polymerization of C9 pore component of the MAC complex. Intracellular forms interact with ubiquitin and SCF (SKP1-CUL1-F-box protein) E3 ubiquitin-protein ligase complexes and promote the ubiquitination and subsequent proteasomal degradation of target proteins. Promotes proteasomal degradation of COMMD1 and IKBKB. Modulates NF-kappa-B transcriptional activity. Following stress, promotes apoptosis. Inhibits apoptosis when associated with the mitochondrial membrane by interference with BAX-dependent release of cytochrome c into the cytoplasm. Plays a role in the regulation of cell proliferation. An intracellular form suppresses stress-induced apoptosis by stabilizing mitochondrial membrane integrity through interaction with HSPA5. Secreted form does not affect caspase or BAX-mediated intrinsic apoptosis and TNF-induced NF-kappa-B-activity. Secreted form act as an important modulator during neuronal differentiation through interaction with STMN3. Plays a role in the clearance of immune complexes that arise during cell injury. In Rattus norvegicus (Rat), this protein is Clusterin.